Consider the following 761-residue polypeptide: MASNERDAISWYQKKIGAYDQQIWEKSIEQTQIKGFKNKPKKMGHIKPDLIDVDLIRGSTFAKAKPEIPWTSLTRKGLVRVVFFPLFSSWWIQVTSLRIFVWLLLLYLMQVTAVVLYLLMPIVSASEVLGPLCLMLLMGTVHCQIVSTQITRPSGNNGNRRRRKLRKTVNGDGSRDNGNNSPDKVRAVETLESASSVGGFWGTLFGNRIKRVKLVSNKGTETDNDSGCFHPILKKRQGRPEIRMWQAREKAKVSDGEKCRREAYRRLGNGISDDLSSEEDGEARTQMILLRRSVEGASSDNGYEVKNRRSILSRHLNSQVKKTTRWCHIVRDSDSLAESEFESAVFSQGSRSGMSGGSRSLNLSRRDSESTRHDSETEDMLWDDLLHGPECRSSVTSDSEGAHVNTIHSGTKRDPKEDVFQQNHLFWLQNSSPASERVSAIIWEGNECKKMDMSVLEISGIIMSRVNAYEQGVGYQMLGNAVTVGLALFPFLYRLFREKSFDQLKSISAEEVLTLFCGAPPVTPVVILSIINFIERLCLTWMFFFMMCVAERTYKQRFLFAKLFSHITSARKARKYEIPHFRLKKVENIKIWLSLRSYLKRRGPQRSVDVVVSSVFLLTLSIAFICCAQVLQGHKTFLNDAYNWEFLIWETALLLFLLRLASLGSETNKKYSNVSILLTEQINLYLKMEKKPNKKEQLTLVNNVLKLSTKLLKELDTPFRLYGLTMNPLIYNITRVVILSAVSGVISDLLGFNIRLWKIKS.

A PHTF domain is found at 6-150 (RDAISWYQKK…VHCQIVSTQI (145 aa)). 3 helical membrane-spanning segments follow: residues 77 to 97 (GLVR…VTSL), 99 to 119 (IFVW…LYLL), and 121 to 141 (PIVS…MGTV). Residues 152-184 (RPSGNNGNRRRRKLRKTVNGDGSRDNGNNSPDK) form a disordered region. Positions 170–181 (NGDGSRDNGNNS) are enriched in low complexity. N-linked (GlcNAc...) asparagine glycans are attached at residues asparagine 179 and asparagine 224. Residues serine 272, serine 276, serine 277, serine 333, and serine 335 each carry the phosphoserine modification. Residues 345 to 414 (VFSQGSRSGM…NTIHSGTKRD (70 aa)) are disordered. Over residues 347-363 (SQGSRSGMSGGSRSLNL) the composition is skewed to low complexity. Asparagine 362 is a glycosylation site (N-linked (GlcNAc...) asparagine). A compositionally biased stretch (basic and acidic residues) spans 364 to 375 (SRRDSESTRHDS). N-linked (GlcNAc...) asparagine glycosylation is present at asparagine 430. The next 4 membrane-spanning stretches (helical) occupy residues 472-492 (GVGY…FPFL), 514-534 (TLFC…INFI), 610-630 (VVVS…CAQV), and 644-664 (WEFL…ASLG). Asparagine 673 and asparagine 732 each carry an N-linked (GlcNAc...) asparagine glycan. A helical membrane pass occupies residues 736-756 (VVILSAVSGVISDLLGFNIRL).

Interacts with FEM1B. In terms of tissue distribution, widely expressed with highest levels in testis.

The protein localises to the endoplasmic reticulum membrane. The protein resides in the golgi apparatus. It localises to the cis-Golgi network membrane. In Mus musculus (Mouse), this protein is Protein PHTF1.